We begin with the raw amino-acid sequence, 218 residues long: Small ribosomal subunit protein uS3 (218 aa).

The KH type-2 domain maps to 38 to 106 (IREFINQRLS…RVHINILEIK (69 aa)).

The protein belongs to the universal ribosomal protein uS3 family. In terms of assembly, part of the 30S ribosomal subunit. Forms a tight complex with proteins S10 and S14.

Binds the lower part of the 30S subunit head. Binds mRNA in the 70S ribosome, positioning it for translation. This is Small ribosomal subunit protein uS3 from Bacillus licheniformis (strain ATCC 14580 / DSM 13 / JCM 2505 / CCUG 7422 / NBRC 12200 / NCIMB 9375 / NCTC 10341 / NRRL NRS-1264 / Gibson 46).